Here is a 215-residue protein sequence, read N- to C-terminus: 3-isopropylmalate dehydratase small subunit (215 aa).

Belongs to the LeuD family. LeuD type 1 subfamily. In terms of assembly, heterodimer of LeuC and LeuD.

It catalyses the reaction (2R,3S)-3-isopropylmalate = (2S)-2-isopropylmalate. Its pathway is amino-acid biosynthesis; L-leucine biosynthesis; L-leucine from 3-methyl-2-oxobutanoate: step 2/4. Its function is as follows. Catalyzes the isomerization between 2-isopropylmalate and 3-isopropylmalate, via the formation of 2-isopropylmaleate. This Teredinibacter turnerae (strain ATCC 39867 / T7901) protein is 3-isopropylmalate dehydratase small subunit.